A 177-amino-acid chain; its full sequence is Large ribosomal subunit protein uL6 (177 aa).

The protein belongs to the universal ribosomal protein uL6 family. Part of the 50S ribosomal subunit.

This protein binds to the 23S rRNA, and is important in its secondary structure. It is located near the subunit interface in the base of the L7/L12 stalk, and near the tRNA binding site of the peptidyltransferase center. This is Large ribosomal subunit protein uL6 from Bordetella bronchiseptica (strain ATCC BAA-588 / NCTC 13252 / RB50) (Alcaligenes bronchisepticus).